Here is a 709-residue protein sequence, read N- to C-terminus: Putative extracellular sulfatase Sulf-1 homolog (709 aa).

An N-terminal signal peptide occupies residues 1–27; the sequence is MISNLRISNYFIIFYVLFLIIPIKVTS. Residues aspartate 43, aspartate 44, and cysteine 79 each coordinate Ca(2+). Cysteine 79 serves as the catalytic Nucleophile. 3-oxoalanine (Cys) is present on cysteine 79. N-linked (GlcNAc...) asparagine glycans are attached at residues asparagine 103, asparagine 162, and asparagine 189. 2 residues coordinate Ca(2+): aspartate 308 and histidine 309. 7 N-linked (GlcNAc...) asparagine glycosylation sites follow: asparagine 344, asparagine 468, asparagine 500, asparagine 540, asparagine 566, asparagine 610, and asparagine 620.

This sequence belongs to the sulfatase family. Ca(2+) is required as a cofactor. In terms of processing, the conversion to 3-oxoalanine (also known as C-formylglycine, FGly), of a serine or cysteine residue in prokaryotes and of a cysteine residue in eukaryotes, is critical for catalytic activity.

The protein resides in the endoplasmic reticulum. The protein localises to the golgi apparatus. It is found in the golgi stack. Its subcellular location is the cell surface. This is Putative extracellular sulfatase Sulf-1 homolog (sul-1) from Caenorhabditis elegans.